The following is a 305-amino-acid chain: GMP synthase [glutamine-hydrolyzing] subunit B (305 aa).

The GMPS ATP-PPase domain maps to 2 to 184 (VNIEKFIDQA…LGLPAEIQHR (183 aa)). Position 29–35 (29–35 (SGGVDSS)) interacts with ATP.

Heterodimer composed of a glutamine amidotransferase subunit (A) and a GMP-binding subunit (B).

It carries out the reaction XMP + L-glutamine + ATP + H2O = GMP + L-glutamate + AMP + diphosphate + 2 H(+). The protein operates within purine metabolism; GMP biosynthesis; GMP from XMP (L-Gln route): step 1/1. In terms of biological role, catalyzes the synthesis of GMP from XMP. This is GMP synthase [glutamine-hydrolyzing] subunit B from Methanoculleus marisnigri (strain ATCC 35101 / DSM 1498 / JR1).